The sequence spans 138 residues: Hydrogenase maturation factor HypA (138 aa).

His2 serves as a coordination point for Ni(2+). 4 residues coordinate Zn(2+): Cys73, Cys76, Cys110, and Cys113.

The protein belongs to the HypA/HybF family.

Functionally, involved in the maturation of [NiFe] hydrogenases. Required for nickel insertion into the metal center of the hydrogenase. This is Hydrogenase maturation factor HypA from Thermococcus sibiricus (strain DSM 12597 / MM 739).